The sequence spans 165 residues: Phosphopantetheine adenylyltransferase (165 aa).

Position 10 (S10) interacts with substrate. ATP is bound by residues 10–11 (SF) and H18. Positions 42, 79, and 93 each coordinate substrate. ATP-binding positions include 94–96 (GLR), E104, and 129–135 (VRPITAT).

It belongs to the bacterial CoaD family. Homohexamer. Mg(2+) is required as a cofactor.

It is found in the cytoplasm. The catalysed reaction is (R)-4'-phosphopantetheine + ATP + H(+) = 3'-dephospho-CoA + diphosphate. It functions in the pathway cofactor biosynthesis; coenzyme A biosynthesis; CoA from (R)-pantothenate: step 4/5. Reversibly transfers an adenylyl group from ATP to 4'-phosphopantetheine, yielding dephospho-CoA (dPCoA) and pyrophosphate. The protein is Phosphopantetheine adenylyltransferase of Afipia carboxidovorans (strain ATCC 49405 / DSM 1227 / KCTC 32145 / OM5) (Oligotropha carboxidovorans).